The chain runs to 2073 residues: Histone acetyltransferase KAT6B (2073 aa).

Residues 1 to 77 (MVKLANPLYT…LASYKDPDNP (77 aa)) form the SAMD1-like winged helix (WH) domain. The disordered stretch occupies residues 72-97 (KDPDNPGRFSSVKPGTFPKSAKGSRG). The H15 domain maps to 103–176 (RNVDWNKLLR…KDGPQYRVNY (74 aa)). 2 PHD-type zinc fingers span residues 213–272 (IPIC…CKTC) and 269–320 (CKTC…CRPK). Residue serine 355 is modified to Phosphoserine. Disordered regions lie at residues 360-409 (EGSM…RPGA), 442-531 (FTPS…VPSL), 553-583 (TQGQ…TAKS), and 639-663 (VTPQ…PDQD). The interval 361 to 717 (GSMNAFTGRG…ECESGVEDCG (357 aa)) is negatively regulates HAT activity. Over residues 379 to 399 (KVCTTPSSGHAASGKDSSSRL) the composition is skewed to polar residues. A compositionally biased stretch (basic and acidic residues) spans 447-460 (DGRRSRGEIIDFSK). Positions 470-485 (QKQSCTSHVLATGTTQ) are enriched in polar residues. Residues 488 to 499 (KPPPSSLPPPTP) show a composition bias toward pro residues. The segment covering 501–531 (SGQSPSSQKSSTATSSPSPQSSSSQCSVPSL) has biased composition (low complexity). Phosphoserine is present on serine 647. A Glycyl lysine isopeptide (Lys-Gly) (interchain with G-Cter in SUMO2) cross-link involves residue lysine 673. The MYST-type HAT domain maps to 715 to 989 (DCGRYPSVIE…LDPDSLRWTP (275 aa)). Residues 718–1008 (RYPSVIEFGK…EEEREAEKEA (291 aa)) form a catalytic region. The C2HC MYST-type zinc-finger motif lies at 748–773 (LYLCEFCLKYMKSKNILLRHSKKCGW). The segment at 752–1008 (EFCLKYMKSK…EEEREAEKEA (257 aa)) is interaction with BRPF1. Lysine 815 bears the N6-acetyllysine; by autocatalysis mark. Acetyl-CoA is bound by residues 856–860 (SCIMI) and 865–871 (QRQGFGR). Glutamate 891 acts as the Proton donor/acceptor in catalysis. Position 895 (serine 895) interacts with acetyl-CoA. Disordered stretches follow at residues 1022–1452 (EQEI…FKEV), 1484–1538 (SCNS…MEID), and 1580–1619 (QSPQ…SPSV). Positions 1025–1043 (ILSTRANSRQSPAKVQSKN) are enriched in polar residues. An N6-acetyllysine mark is found at lysine 1038, lysine 1042, and lysine 1044. The residue at position 1048 (serine 1048) is a Phosphoserine. Residues 1069–1105 (SEEEEEEEDEEEEEEEEEEEEDEEEEEEEEEEEEEEN) show a composition bias toward acidic residues. Polar residues predominate over residues 1106–1117 (IQSSPPRLTKPQ). Residues 1121-1140 (IKRKRPFVLKKKRGRKRRRI) show a composition bias toward basic residues. A compositionally biased stretch (low complexity) spans 1142–1155 (SSVTTETISETTEV). The segment covering 1187-1200 (PVLRKAFQHQPGKK) has biased composition (basic residues). Composition is skewed to basic and acidic residues over residues 1229–1243 (SNLK…EPLK), 1306–1315 (RIEEEVKETG), and 1341–1350 (EKPEDDLIKP). Positions 1351-1374 (EEEEEEEEEEEEEEEEEEGEEEEG) are enriched in acidic residues. Composition is skewed to basic and acidic residues over residues 1378–1390 (VEKD…SQEK) and 1396–1407 (STEKEDSARLDD). A compositionally biased stretch (acidic residues) spans 1408-1417 (HEEEEEEDEE). Basic and acidic residues predominate over residues 1433–1452 (HMESAEVEKEELPRESFKEV). Positions 1498 to 1507 (AVPESDEEPP) are enriched in acidic residues. A compositionally biased stretch (basic and acidic residues) spans 1513-1529 (QKQDQKNSKEVDTEFKE). The tract at residues 1560 to 2073 (QDCAETQEAC…QSLNGSYMRR (514 aa)) is interaction with RUNX1 and RUNX2. A compositionally biased stretch (polar residues) spans 1580-1591 (QSPQIATTLDDC). Over residues 1594–1611 (SDHSSPVSSVHSHPGQSV) the composition is skewed to low complexity.

This sequence belongs to the MYST (SAS/MOZ) family. As to quaternary structure, component of the MOZ/MORF complex composed at least of ING5, KAT6A, KAT6B, MEAF6 and one of BRPF1, BRD1/BRPF2 and BRPF3. Interacts with RUNX1 and RUNX2. Post-translationally, autoacetylated. Autoacetylation at Lys-815 is required for proper function. Ubiquitously expressed, with high levels in heart, pancreas, testis and ovary.

It localises to the nucleus. The enzyme catalyses L-lysyl-[protein] + acetyl-CoA = N(6)-acetyl-L-lysyl-[protein] + CoA + H(+). Its function is as follows. Histone acetyltransferase which may be involved in both positive and negative regulation of transcription. Required for RUNX2-dependent transcriptional activation. May be involved in cerebral cortex development. Component of the MOZ/MORF complex which has a histone H3 acetyltransferase activity. The protein is Histone acetyltransferase KAT6B (KAT6B) of Homo sapiens (Human).